The sequence spans 383 residues: Chorismate synthase (383 aa).

Residues R39 and R45 each coordinate NADP(+). FMN-binding positions include 127-129 (RAS), 249-250 (QS), G294, 309-313 (KPIPT), and R335.

It belongs to the chorismate synthase family. In terms of assembly, homotetramer. The cofactor is FMNH2.

The enzyme catalyses 5-O-(1-carboxyvinyl)-3-phosphoshikimate = chorismate + phosphate. Its pathway is metabolic intermediate biosynthesis; chorismate biosynthesis; chorismate from D-erythrose 4-phosphate and phosphoenolpyruvate: step 7/7. Catalyzes the anti-1,4-elimination of the C-3 phosphate and the C-6 proR hydrogen from 5-enolpyruvylshikimate-3-phosphate (EPSP) to yield chorismate, which is the branch point compound that serves as the starting substrate for the three terminal pathways of aromatic amino acid biosynthesis. This reaction introduces a second double bond into the aromatic ring system. This Caldicellulosiruptor bescii (strain ATCC BAA-1888 / DSM 6725 / KCTC 15123 / Z-1320) (Anaerocellum thermophilum) protein is Chorismate synthase.